A 370-amino-acid polypeptide reads, in one-letter code: Maturase K (370 aa).

It belongs to the intron maturase 2 family. MatK subfamily.

The protein localises to the plastid. It is found in the chloroplast. In terms of biological role, usually encoded in the trnK tRNA gene intron. Probably assists in splicing its own and other chloroplast group II introns. This is Maturase K from Marchantia polymorpha (Common liverwort).